The chain runs to 716 residues: 1,4-alpha-glucan branching enzyme GlgB (716 aa).

Catalysis depends on Asp399, which acts as the Nucleophile. Glu452 functions as the Proton donor in the catalytic mechanism.

It belongs to the glycosyl hydrolase 13 family. GlgB subfamily. As to quaternary structure, monomer.

It catalyses the reaction Transfers a segment of a (1-&gt;4)-alpha-D-glucan chain to a primary hydroxy group in a similar glucan chain.. It functions in the pathway glycan biosynthesis; glycogen biosynthesis. In terms of biological role, catalyzes the formation of the alpha-1,6-glucosidic linkages in glycogen by scission of a 1,4-alpha-linked oligosaccharide from growing alpha-1,4-glucan chains and the subsequent attachment of the oligosaccharide to the alpha-1,6 position. The chain is 1,4-alpha-glucan branching enzyme GlgB from Rhodopseudomonas palustris (strain BisB5).